The sequence spans 393 residues: S-adenosylmethionine synthase 2 (393 aa).

A Mg(2+)-binding site is contributed by E9. An ATP-binding site is contributed by H15. Residue E43 participates in K(+) binding. L-methionine contacts are provided by E56 and Q99. Residues 167–169, 235–238, D246, 252–253, A269, K273, and K277 contribute to the ATP site; these read DGK, SGRF, and RK. Residue D246 coordinates L-methionine. K277 serves as a coordination point for L-methionine.

It belongs to the AdoMet synthase family. Homotetramer. Requires Mn(2+) as cofactor. Mg(2+) is required as a cofactor. It depends on Co(2+) as a cofactor. K(+) serves as cofactor.

The protein localises to the cytoplasm. It catalyses the reaction L-methionine + ATP + H2O = S-adenosyl-L-methionine + phosphate + diphosphate. The protein operates within amino-acid biosynthesis; S-adenosyl-L-methionine biosynthesis; S-adenosyl-L-methionine from L-methionine: step 1/1. Functionally, catalyzes the formation of S-adenosylmethionine from methionine and ATP. The reaction comprises two steps that are both catalyzed by the same enzyme: formation of S-adenosylmethionine (AdoMet) and triphosphate, and subsequent hydrolysis of the triphosphate. This chain is S-adenosylmethionine synthase 2 (SAMS2), found in Elaeagnus umbellata (Autumn olive).